We begin with the raw amino-acid sequence, 569 residues long: Proline--tRNA ligase (569 aa).

This sequence belongs to the class-II aminoacyl-tRNA synthetase family. ProS type 1 subfamily. Homodimer.

The protein resides in the cytoplasm. The enzyme catalyses tRNA(Pro) + L-proline + ATP = L-prolyl-tRNA(Pro) + AMP + diphosphate. Catalyzes the attachment of proline to tRNA(Pro) in a two-step reaction: proline is first activated by ATP to form Pro-AMP and then transferred to the acceptor end of tRNA(Pro). As ProRS can inadvertently accommodate and process non-cognate amino acids such as alanine and cysteine, to avoid such errors it has two additional distinct editing activities against alanine. One activity is designated as 'pretransfer' editing and involves the tRNA(Pro)-independent hydrolysis of activated Ala-AMP. The other activity is designated 'posttransfer' editing and involves deacylation of mischarged Ala-tRNA(Pro). The misacylated Cys-tRNA(Pro) is not edited by ProRS. The sequence is that of Proline--tRNA ligase from Halalkalibacterium halodurans (strain ATCC BAA-125 / DSM 18197 / FERM 7344 / JCM 9153 / C-125) (Bacillus halodurans).